Here is a 151-residue protein sequence, read N- to C-terminus: Cathelicidin-3 (151 aa).

Residues 1–17 (MLSCWVLLLALLGGACA) form the signal peptide. Positions 18–122 (LPAPLGYSQA…TCVDSMADPV (105 aa)) are excised as a propeptide. Disulfide bonds link Cys-75–Cys-86 and Cys-97–Cys-114. A helical transmembrane segment spans residues 128–148 (WPLVPVAINTVAAGINLYKAI).

The protein belongs to the cathelicidin family. In terms of tissue distribution, detected in bone marrow, liver and lung.

Its subcellular location is the secreted. It is found in the membrane. In terms of biological role, may bind bacterial lipopolysaccharide (LPS). May have antimicrobial activity and play a role in the innate immune response. In Gallus gallus (Chicken), this protein is Cathelicidin-3 (CATHL3).